A 51-amino-acid chain; its full sequence is ATP synthase subunit epsilon-like protein, mitochondrial (51 aa).

Lys-21 is subject to N6-acetyllysine.

It belongs to the eukaryotic ATPase epsilon family. F-type ATPases have 2 components, CF(1) - the catalytic core - and CF(0) - the membrane proton channel. CF(1) has five subunits: alpha(3), beta(3), gamma(1), delta(1), epsilon(1). CF(0) seems to have nine subunits: a, b, c, d, e, f, g, F6 and 8 (or A6L).

The protein resides in the mitochondrion inner membrane. Functionally, mitochondrial membrane ATP synthase (F(1)F(0) ATP synthase or Complex V) produces ATP from ADP in the presence of a proton gradient across the membrane which is generated by electron transport complexes of the respiratory chain. F-type ATPases consist of two structural domains, F(1) - containing the extramembraneous catalytic core, and F(0) - containing the membrane proton channel, linked together by a central stalk and a peripheral stalk. During catalysis, ATP synthesis in the catalytic domain of F(1) is coupled via a rotary mechanism of the central stalk subunits to proton translocation. Part of the complex F(1) domain and of the central stalk which is part of the complex rotary element. Rotation of the central stalk against the surrounding alpha(3)beta(3) subunits leads to hydrolysis of ATP in three separate catalytic sites on the beta subunits. The chain is ATP synthase subunit epsilon-like protein, mitochondrial from Homo sapiens (Human).